The chain runs to 502 residues: ATP synthase subunit alpha (502 aa).

Gly169–Thr176 lines the ATP pocket.

The protein belongs to the ATPase alpha/beta chains family. In terms of assembly, F-type ATPases have 2 components, CF(1) - the catalytic core - and CF(0) - the membrane proton channel. CF(1) has five subunits: alpha(3), beta(3), gamma(1), delta(1), epsilon(1). CF(0) has three main subunits: a(1), b(2) and c(9-12). The alpha and beta chains form an alternating ring which encloses part of the gamma chain. CF(1) is attached to CF(0) by a central stalk formed by the gamma and epsilon chains, while a peripheral stalk is formed by the delta and b chains.

The protein resides in the cell membrane. The enzyme catalyses ATP + H2O + 4 H(+)(in) = ADP + phosphate + 5 H(+)(out). Produces ATP from ADP in the presence of a proton gradient across the membrane. The alpha chain is a regulatory subunit. In Bacillus pumilus (strain SAFR-032), this protein is ATP synthase subunit alpha.